Consider the following 148-residue polypeptide: Methylated-DNA--protein-cysteine methyltransferase (148 aa).

Cysteine 90 functions as the Nucleophile; methyl group acceptor in the catalytic mechanism.

Belongs to the MGMT family.

Its subcellular location is the cytoplasm. It catalyses the reaction a 6-O-methyl-2'-deoxyguanosine in DNA + L-cysteinyl-[protein] = S-methyl-L-cysteinyl-[protein] + a 2'-deoxyguanosine in DNA. It carries out the reaction a 4-O-methyl-thymidine in DNA + L-cysteinyl-[protein] = a thymidine in DNA + S-methyl-L-cysteinyl-[protein]. Functionally, involved in the cellular defense against the biological effects of O6-methylguanine (O6-MeG) and O4-methylthymine (O4-MeT) in DNA. Repairs the methylated nucleobase in DNA by stoichiometrically transferring the methyl group to a cysteine residue in the enzyme. This is a suicide reaction: the enzyme is irreversibly inactivated. This Pyrobaculum aerophilum (strain ATCC 51768 / DSM 7523 / JCM 9630 / CIP 104966 / NBRC 100827 / IM2) protein is Methylated-DNA--protein-cysteine methyltransferase (ogt).